The primary structure comprises 331 residues: Autoinducer 2 import system permease protein LsrC (331 aa).

9 helical membrane-spanning segments follow: residues 14–34 (LIAILCLFGLLSVIDHQYFSL), 39–59 (LVFSSAQILILLAIGATLVML), 70–90 (IAGLCAVIMGMSLNAGFNLPV), 93–113 (LLTLLLGMCAGFINGALVTWL), 115–135 (IPAIVTTLGTLGLYRGLMLLL), 157–177 (LNISPIGWLLMILILAMAWIL), 206–226 (IQIIAFSVNGIMAALAGIVFA), 252–272 (GISLLGGTGTVIGAILGAFFL), and 284–304 (LPAWWNDFIAGFVLLAVLIFD).

It belongs to the binding-protein-dependent transport system permease family. AraH/RbsC subfamily. As to quaternary structure, the complex is composed of two ATP-binding proteins (LsrA), two transmembrane proteins (LsrC and LsrD) and a solute-binding protein (LsrB).

The protein localises to the cell inner membrane. Part of the ABC transporter complex LsrABCD involved in autoinducer 2 (AI-2) import. Probably responsible for the translocation of the substrate across the membrane. The sequence is that of Autoinducer 2 import system permease protein LsrC (lsrC) from Photorhabdus luminescens (Xenorhabdus luminescens).